We begin with the raw amino-acid sequence, 443 residues long: ATP-dependent protease ATPase subunit HslU (443 aa).

ATP contacts are provided by residues Ile-20, Gly-62–Glu-67, Asp-255, Glu-321, and Arg-393.

This sequence belongs to the ClpX chaperone family. HslU subfamily. In terms of assembly, a double ring-shaped homohexamer of HslV is capped on each side by a ring-shaped HslU homohexamer. The assembly of the HslU/HslV complex is dependent on binding of ATP.

It is found in the cytoplasm. Functionally, ATPase subunit of a proteasome-like degradation complex; this subunit has chaperone activity. The binding of ATP and its subsequent hydrolysis by HslU are essential for unfolding of protein substrates subsequently hydrolyzed by HslV. HslU recognizes the N-terminal part of its protein substrates and unfolds these before they are guided to HslV for hydrolysis. In Helicobacter pylori (strain ATCC 700392 / 26695) (Campylobacter pylori), this protein is ATP-dependent protease ATPase subunit HslU.